Reading from the N-terminus, the 640-residue chain is F-box protein MET30 (640 aa).

Over residues 1-19 the composition is skewed to basic and acidic residues; sequence MRRERQRMMSFEDKDKDDL. A disordered region spans residues 1–84; sequence MRRERQRMMS…ATNDSGTRVQ (84 aa). A necessary to mediate nuclear localization region spans residues 1 to 299; sequence MRRERQRMMS…KGHCRIQEFK (299 aa). Polar residues-rich tracts occupy residues 45–56 and 64–82; these read TGSSDDLAQGSS and ATRS…SGTR. The residue at position 67 (Ser-67) is a Phosphoserine. The interval 180 to 225 is interaction with SKP1/CBF3D; sequence KIDFISILPQELSLKILSYLDCQSLCNATRVCRKWQKLADDDRVWY. Positions 180–277 are important for mediating homomultimerization; the sequence is KIDFISILPQ…TQTTRPWKVI (98 aa). The region spanning 181–227 is the F-box domain; that stretch reads IDFISILPQELSLKILSYLDCQSLCNATRVCRKWQKLADDDRVWYHM. The segment at 277–640 is interaction with MET4; that stretch reads IYRERFKVES…VKMYKFDLND (364 aa). WD repeat units lie at residues 300-328, 340-368, 380-408, 419-449, 461-499, 509-538, 550-578, and 607-635; these read GHMD…GIWD, GHSD…RVWN, GHSD…KVWH, GHTE…RMWD, GHVG…TMTD, NEQE…KLWD, GHVE…KVWD, and DKVA…KMYK. Residues 481-495 are compositionally biased toward polar residues; that stretch reads ATDNTSDGSSPQDDP. The tract at residues 481–516 is disordered; the sequence is ATDNTSDGSSPQDDPTMTDGADESDTPSNEQETVLD.

This sequence belongs to the WD repeat MET30/SCONB/SCON-2 family. Homomultimer. Interacts with CDC53 and SKP1/CBF3D to form the E3 ubiquitin ligase complex SCF(Met30). Interacts with MET4.

It is found in the cytoplasm. The protein localises to the nucleus. It functions in the pathway protein modification; protein ubiquitination. In terms of biological role, substrate-recognition component of the SCF(Met30) complex, an E3 ubiquitin ligase complex that mediates the ubiquitination and subsequent proteasomal degradation of target proteins. Negatively regulates sulfur amino acids biosynthesis genes expression. Controls cell cycle function (being required for the G1/S transition and M-phase but not the S-phase), sulfur metabolism, and methionine biosynthesis as part of the SCF(Met30) complex. Required for the efficient binding of CDC45 and MCM proteins to origins of replication. Required for efficient expression of G1 cyclins. The SCF(Met30) complex catalyzes ubiquitination and degradation of the Cdk-inhibitory kinase SWE1. Involved in the S-adenosylmethionine (AdoMet)-mediated inhibition of the transcription function of MET4. The SCF(Met30) complex mediates ubiquitination and subsequent degradation of MET4 and the cellular response to cadmium. The SCF(Met30) complex acts as an inhibitor of autophagy by promoting ubiquitination and degradation of ATG9 in normal conditions. The sequence is that of F-box protein MET30 from Saccharomyces cerevisiae (strain ATCC 204508 / S288c) (Baker's yeast).